We begin with the raw amino-acid sequence, 101 residues long: Small ribosomal subunit protein bS18c (101 aa).

The span at 1–19 (MDKSKQPFRKSKRSFRRRL) shows a compositional bias: basic residues. The segment at 1 to 26 (MDKSKQPFRKSKRSFRRRLPPIGSGD) is disordered.

This sequence belongs to the bacterial ribosomal protein bS18 family. Part of the 30S ribosomal subunit.

The protein localises to the plastid. It is found in the chloroplast. The chain is Small ribosomal subunit protein bS18c from Phalaenopsis aphrodite subsp. formosana (Moth orchid).